Consider the following 524-residue polypeptide: General transcription factor IIF subunit 1 (524 aa).

2 disordered regions span residues 56 to 76 (MYQEEEMPESGAGSEYNRKQR) and 181 to 462 (RLKD…IQLT). The span at 242-257 (KPQKKVPAKGGKKKKR) shows a compositional bias: basic residues. Residues 262–289 (EALEDSDDGDFEGQEVDYMSDESSSDEE) are compositionally biased toward acidic residues. The span at 290 to 307 (LPGKIKPAKEEEGPKGLD) shows a compositional bias: basic and acidic residues. Composition is skewed to acidic residues over residues 308–327 (EQSESSEESEEEKAEEEEGE) and 347–358 (SDESETSEDSDI). The span at 368 to 378 (QKKKTPPKKDK) shows a compositional bias: basic residues. Residues 381–397 (GSNSSSRGNSRPGTPSP) are compositionally biased toward low complexity. Residues 436-459 (PQNTSGKSTPQPQSGKSTPSSGDI) are compositionally biased toward polar residues.

Belongs to the TFIIF alpha subunit family. In terms of assembly, heterodimer of an alpha and a beta subunit. In terms of processing, phosphorylated on Ser and other residues by TAF1 and casein kinase II-like kinases.

It is found in the nucleus. In terms of biological role, TFIIF is a general transcription initiation factor that binds to RNA polymerase II and helps to recruit it to the initiation complex in collaboration with TFIIB. It promotes transcription elongation. The protein is General transcription factor IIF subunit 1 (gtf2f1) of Xenopus laevis (African clawed frog).